Reading from the N-terminus, the 502-residue chain is uncharacterized protein (502 aa).

A helical transmembrane segment spans residues 1–21; it reads MKIFLVILSVFFFNGCFGLAY. 2 consecutive PLD phosphodiesterase domains span residues 162–189 and 396–423; these read IKKR…GDNY and TKHS…DPRS.

The protein belongs to the phospholipase D family. Cardiolipin synthase subfamily.

The protein localises to the cell membrane. This is an uncharacterized protein from Helicobacter pylori (strain J99 / ATCC 700824) (Campylobacter pylori J99).